Consider the following 185-residue polypeptide: Ribosome-recycling factor (185 aa).

Belongs to the RRF family.

The protein localises to the cytoplasm. Functionally, responsible for the release of ribosomes from messenger RNA at the termination of protein biosynthesis. May increase the efficiency of translation by recycling ribosomes from one round of translation to another. In Enterobacter sp. (strain 638), this protein is Ribosome-recycling factor.